Consider the following 473-residue polypeptide: MKTLYSPRRFYPVETLFNGTLTLAGRDQETTGFAWWAGNARLINLSGKLLGAHVSHAGLIVFWAGSMNLFEVAHFIPEKPMYEQGLILLPHLATLGWGVGPGGEIVDTFPYFVSGVLHLISSAVLGFGGIYHALIGPETLEESFPFFGYTWKDRNKMTTILGIHLILLGAGAFLLVFKALFFGGIYDTWAPGGGDVRKITNLTLSPNIIFGYLLKSPFGGEGWIVSVDNLEDLIGGHFWLGSICIFGGIWHILTKPFAWTRRAFVWSGEAYLSYSLGALSVFGFIACCFVWFNNTAYPSEFYGPTGPEASQAQAFTFLVRDQRLGASVGSAQGPTGLGKYLMRSPTGEIIFGGETMRFWDLRAPWLEPLRGPNGLDLSKLKKDIQPWQERRSAEYMTHAPLGSLNSVGGVATEINAVNFVSPRSWLATSHFVLGFFFFVGHLWHAGRARAAAAGFEKGIDRDLEPVLFMTPLN.

Positions 1–14 (MKTLYSPRRFYPVE) are excised as a propeptide. T15 carries the post-translational modification N-acetylthreonine. T15 carries the post-translational modification Phosphothreonine. A run of 5 helical transmembrane segments spans residues 69-93 (LFEVAHFIPEKPMYEQGLILLPHLA), 134-155 (LIGPETLEESFPFFGYTWKDRN), 178-200 (KALFFGGIYDTWAPGGGDVRKIT), 255-275 (KPFAWTRRAFVWSGEAYLSYS), and 291-312 (WFNNTAYPSEFYGPTGPEASQA). E367 lines the [CaMn4O5] cluster pocket. A helical transmembrane segment spans residues 447–471 (RARAAAAGFEKGIDRDLEPVLFMTP).

It belongs to the PsbB/PsbC family. PsbC subfamily. As to quaternary structure, PSII is composed of 1 copy each of membrane proteins PsbA, PsbB, PsbC, PsbD, PsbE, PsbF, PsbH, PsbI, PsbJ, PsbK, PsbL, PsbM, PsbT, PsbX, PsbY, PsbZ, Psb30/Ycf12, at least 3 peripheral proteins of the oxygen-evolving complex and a large number of cofactors. It forms dimeric complexes. Binds multiple chlorophylls and provides some of the ligands for the Ca-4Mn-5O cluster of the oxygen-evolving complex. It may also provide a ligand for a Cl- that is required for oxygen evolution. PSII binds additional chlorophylls, carotenoids and specific lipids. is required as a cofactor.

Its subcellular location is the plastid. It localises to the chloroplast thylakoid membrane. One of the components of the core complex of photosystem II (PSII). It binds chlorophyll and helps catalyze the primary light-induced photochemical processes of PSII. PSII is a light-driven water:plastoquinone oxidoreductase, using light energy to abstract electrons from H(2)O, generating O(2) and a proton gradient subsequently used for ATP formation. This chain is Photosystem II CP43 reaction center protein, found in Gnetum parvifolium (Small-leaved jointfir).